A 154-amino-acid chain; its full sequence is 6,7-dimethyl-8-ribityllumazine synthase (154 aa).

Residues Phe22, 57 to 59 (AYE), and 81 to 83 (AVI) contribute to the 5-amino-6-(D-ribitylamino)uracil site. A (2S)-2-hydroxy-3-oxobutyl phosphate-binding site is contributed by 86–87 (GT). The active-site Proton donor is His89. Residue Phe114 coordinates 5-amino-6-(D-ribitylamino)uracil. Residue Arg128 participates in (2S)-2-hydroxy-3-oxobutyl phosphate binding.

Belongs to the DMRL synthase family. Forms an icosahedral capsid composed of 60 subunits, arranged as a dodecamer of pentamers.

The enzyme catalyses (2S)-2-hydroxy-3-oxobutyl phosphate + 5-amino-6-(D-ribitylamino)uracil = 6,7-dimethyl-8-(1-D-ribityl)lumazine + phosphate + 2 H2O + H(+). It participates in cofactor biosynthesis; riboflavin biosynthesis; riboflavin from 2-hydroxy-3-oxobutyl phosphate and 5-amino-6-(D-ribitylamino)uracil: step 1/2. Catalyzes the formation of 6,7-dimethyl-8-ribityllumazine by condensation of 5-amino-6-(D-ribitylamino)uracil with 3,4-dihydroxy-2-butanone 4-phosphate. This is the penultimate step in the biosynthesis of riboflavin. The polypeptide is 6,7-dimethyl-8-ribityllumazine synthase (Idiomarina loihiensis (strain ATCC BAA-735 / DSM 15497 / L2-TR)).